The following is a 334-amino-acid chain: Lipoyl synthase (334 aa).

Residues 8-33 are disordered; sequence LNNDTRPKVEAPARPRHPEKAHRPDT. Over residues 12–33 the composition is skewed to basic and acidic residues; sequence TRPKVEAPARPRHPEKAHRPDT. Residues Cys-68, Cys-73, Cys-79, Cys-94, Cys-98, Cys-101, and Ser-307 each contribute to the [4Fe-4S] cluster site. A Radical SAM core domain is found at 80–296; sequence WEKRHATFMI…ETTAYAKGFL (217 aa).

This sequence belongs to the radical SAM superfamily. Lipoyl synthase family. Requires [4Fe-4S] cluster as cofactor.

It is found in the cytoplasm. The catalysed reaction is [[Fe-S] cluster scaffold protein carrying a second [4Fe-4S](2+) cluster] + N(6)-octanoyl-L-lysyl-[protein] + 2 oxidized [2Fe-2S]-[ferredoxin] + 2 S-adenosyl-L-methionine + 4 H(+) = [[Fe-S] cluster scaffold protein] + N(6)-[(R)-dihydrolipoyl]-L-lysyl-[protein] + 4 Fe(3+) + 2 hydrogen sulfide + 2 5'-deoxyadenosine + 2 L-methionine + 2 reduced [2Fe-2S]-[ferredoxin]. Its pathway is protein modification; protein lipoylation via endogenous pathway; protein N(6)-(lipoyl)lysine from octanoyl-[acyl-carrier-protein]: step 2/2. Functionally, catalyzes the radical-mediated insertion of two sulfur atoms into the C-6 and C-8 positions of the octanoyl moiety bound to the lipoyl domains of lipoate-dependent enzymes, thereby converting the octanoylated domains into lipoylated derivatives. This Methylorubrum populi (strain ATCC BAA-705 / NCIMB 13946 / BJ001) (Methylobacterium populi) protein is Lipoyl synthase.